The primary structure comprises 287 residues: 33 kDa chaperonin (287 aa).

2 cysteine pairs are disulfide-bonded: Cys233–Cys235 and Cys266–Cys269.

Belongs to the HSP33 family. In terms of processing, under oxidizing conditions two disulfide bonds are formed involving the reactive cysteines. Under reducing conditions zinc is bound to the reactive cysteines and the protein is inactive.

The protein resides in the cytoplasm. In terms of biological role, redox regulated molecular chaperone. Protects both thermally unfolding and oxidatively damaged proteins from irreversible aggregation. Plays an important role in the bacterial defense system toward oxidative stress. This is 33 kDa chaperonin from Thermodesulfovibrio yellowstonii (strain ATCC 51303 / DSM 11347 / YP87).